Here is a 356-residue protein sequence, read N- to C-terminus: Dynein regulatory complex protein 10 (356 aa).

A coiled-coil region spans residues 126 to 167 (SNREFFEEVRDREERAVAEQEQLKQKLKLQRVELQKAAGTIQ). Positions 173-209 (ARGEVSEVQSSTQQSRAAIEGSARAQSEADKSSFQSD) are disordered. Residues 178–187 (SEVQSSTQQS) show a composition bias toward low complexity. Positions 197 to 287 (AQSEADKSSF…LRQLQEYNSG (91 aa)) form a coiled coil. Residues 319-348 (QNHAARVIQSYWRGFKKAREAAKKKAKKLE) form the IQ domain.

It belongs to the DRC10 family. In terms of assembly, component of the nexin-dynein regulatory complex (N-DRC).

It localises to the cytoplasm. It is found in the cytoskeleton. The protein resides in the flagellum axoneme. Functionally, component of the nexin-dynein regulatory complex (N-DRC), a key regulator of ciliary/flagellar motility which maintains the alignment and integrity of the distal axoneme and regulates microtubule sliding in motile axonemes. This chain is Dynein regulatory complex protein 10, found in Chlamydomonas reinhardtii (Chlamydomonas smithii).